The sequence spans 100 residues: MTPWFLYLIRTADNKLYTGITTDVERRYQQHQSGKGAKALRGKGELTLAFSAPVGDRSLALRAEYRVKQLTKRQKERLVAEGSGFAELISSLQTPEIKSD.

The region spanning 2–77 is the GIY-YIG domain; it reads TPWFLYLIRT…KQLTKRQKER (76 aa).

Belongs to the UPF0213 family.

This Escherichia fergusonii (strain ATCC 35469 / DSM 13698 / CCUG 18766 / IAM 14443 / JCM 21226 / LMG 7866 / NBRC 102419 / NCTC 12128 / CDC 0568-73) protein is UPF0213 protein YhbQ.